The following is a 31-amino-acid chain: Nemertide alpha-4 (31 aa).

3 disulfide bridges follow: C2/C16, C9/C20, and C15/C26. P28 and P29 each carry 4-hydroxyproline.

It belongs to the nemertide family. In terms of tissue distribution, confined to the epidermis and to the mucus layer.

The protein resides in the secreted. Potent toxin, demonstrating strong inhibitory effects on insect sodium channels (Nav) and reduced activity on mammalian sodium channels. Potently inhibits inactivation of insect sodium channels of B.germanica (BgNav1) (EC(50)=11.1 nM). Also delays the inactivation of most mammalian Nav (human Nav1.1/SCN1A; EC(50)=92 nM, rat Nav1.2/SCN2A; EC(50)=134.2 nM, rat Nav1.3/SCN3A; EC(50)=12.9 nM, rat Nav1.4/SCN4A; EC(50)=14.6 nM, human Nav1.5/SCN5A; EC(50)=27.8 nM, mouse Nav1.6/SCN8A; EC(50)=123.6 nM, human Nav1.9/SCN9A; EC(50)=80.5 nM). Inactivation is completely prevented by a concentration of 1 uM, resulting in sustained, non-inactivating currents. In addition, the toxin significantly enhances the recovery from inactivation, and the open state is not required for the toxin to interact with the channel. In vivo, injection into brine shrimp (Artemia salina) stops movement or causes death after 24 hours (EC(50)=0.4 uM). This is Nemertide alpha-4 from Lineus sanguineus (Ribbon worm).